A 444-amino-acid polypeptide reads, in one-letter code: Protein EMP46 (444 aa).

Residues 1–46 (MTTRKTASSLQLLGKITGTKAGTKQKKMNFINGLIWLYMCVWMVHG) form the signal peptide. The Lumenal portion of the chain corresponds to 47 to 408 (KVTQKDELKW…YGKQTKGHDE (362 aa)). The region spanning 52–269 (DELKWNKGYS…EILKMKLYDG (218 aa)) is the L-type lectin-like domain. Tyr-177 serves as a coordination point for K(+). A disulfide bridge links Cys-196 with Cys-230. The chain crosses the membrane as a helical span at residues 409–429 (IFSKISVWLALLIFIMITLAY). Residues 429–432 (YYMF) form a mediates the interactions with COPI and COPII coat complexes region. Residues 430-444 (YMFRINQDIKKVKLL) lie on the Cytoplasmic side of the membrane. Positions 440–444 (KVKLL) match the Di-lysine motif motif.

The protein belongs to the EMP46/EMP47 family. Interacts with EMP47 in the endoplasmic reticulum membrane in order to be transported to the Golgi apparatus. Interacts with the coatomer proteins COP1, SEC21 and SEC23.

It is found in the golgi apparatus membrane. Its subcellular location is the endoplasmic reticulum membrane. Functionally, involved in the secretion of glycoproteins and in nucleus architecture and gene silencing. The sequence is that of Protein EMP46 (EMP46) from Saccharomyces cerevisiae (strain ATCC 204508 / S288c) (Baker's yeast).